Reading from the N-terminus, the 777-residue chain is Dynamin-like protein ARC5 (777 aa).

Residues 45 to 343 enclose the Dynamin-type G domain; it reads PFEAPAVLVV…LWKRYKESVP (299 aa). Positions 55-62 are G1 motif; the sequence is GQQTDGKS. 55–62 provides a ligand contact to GTP; the sequence is GQQTDGKS. A G2 motif region spans residues 81 to 83; the sequence is KTR. The segment at 160–163 is G3 motif; it reads DTPG. Residues 160-164 and 231-234 each bind GTP; these read DTPGL and TKLD. Residues 231 to 234 form a G4 motif region; sequence TKLD. The interval 265–268 is G5 motif; sequence SPFF. 2 coiled-coil regions span residues 300-320 and 728-765; these read EDIA…EKSR and NLRQ…NSHE.

This sequence belongs to the TRAFAC class dynamin-like GTPase superfamily. Dynamin/Fzo/YdjA family. Forms a homodimer and heterodimers with DRP3A and DRP3B on peroxisomes. Also interacts with FIS1A (but not FIS1B) and PEX11 proteins (PEX11A, PEX11B, PEX11C, PEX11D and PEX11E) on peroxisomes. Interacts with PDV1 and PDV2. Post-translationally, stabilized at the plastid outer envelope membranes (OEMs) in the constriction site when in complex with GTP, but destabilized after conversion of GTP into GDP leading to turnover with a cytosolic pool.

It is found in the cytoplasm. The protein resides in the plastid. The protein localises to the chloroplast outer membrane. Its subcellular location is the peroxisome. It localises to the cytosol. The enzyme catalyses GTP + H2O = GDP + phosphate + H(+). Its activity is regulated as follows. GTPase activity is repressed by PDV2 thus increasing stability at the plastid outer envelope membranes (OEMs) periphery. Its function is as follows. Mechanochemical GTPase component of both plastid and peroxisome division machinery. Required for the last steps of plastid division specifically in mesophyll-cell, when the narrow isthmus breaks, facilitating the separation of the daughter plastids. Necessary for peroxisome activities. Seems to influence stromule (stroma-filled tubular extensions of the plastid envelope membrane) length and frequency. The sequence is that of Dynamin-like protein ARC5 from Arabidopsis thaliana (Mouse-ear cress).